Here is a 469-residue protein sequence, read N- to C-terminus: Adenosylhomocysteinase (469 aa).

Substrate is bound by residues T63, D139, and E164. An NAD(+)-binding site is contributed by 165-167 (TTT). Residues K194 and D198 each contribute to the substrate site. NAD(+)-binding positions include N199, 228–233 (GYGDVG), E251, N300, 321–323 (IGH), and N375.

It belongs to the adenosylhomocysteinase family. Requires NAD(+) as cofactor.

The protein resides in the cytoplasm. It catalyses the reaction S-adenosyl-L-homocysteine + H2O = L-homocysteine + adenosine. It functions in the pathway amino-acid biosynthesis; L-homocysteine biosynthesis; L-homocysteine from S-adenosyl-L-homocysteine: step 1/1. Its function is as follows. May play a key role in the regulation of the intracellular concentration of adenosylhomocysteine. This chain is Adenosylhomocysteinase, found in Pseudomonas fluorescens (strain Pf0-1).